Consider the following 2222-residue polypeptide: DNA polymerase epsilon catalytic subunit A (2222 aa).

A disordered region spans residues 90–110 (ETLSSGSNGGGNSNDGERVTT). Residues C2108, C2111, C2130, and C2133 each contribute to the Zn(2+) site. The CysA-type zinc finger occupies 2108-2133 (CEYCFFISDIDFCKAAPESIFSCVRC). Positions 2164, 2167, 2179, and 2181 each coordinate [4Fe-4S] cluster. The CysB motif signature appears at 2164-2181 (CSRCHKVKRDYMSAHCPC).

Belongs to the DNA polymerase type-B family. In terms of assembly, DNA polymerase epsilon is a heterotetramer consisting of POL2, DPB2, DPB3 and DPB4. It depends on [4Fe-4S] cluster as a cofactor.

The protein localises to the nucleus. It carries out the reaction DNA(n) + a 2'-deoxyribonucleoside 5'-triphosphate = DNA(n+1) + diphosphate. Catalytic component of the DNA polymerase epsilon complex which participates in chromosomal DNA replication. Required during synthesis of the leading DNA strands at the replication fork, binds at/or near replication origins and moves along DNA with the replication fork. Has 3'-5' proofreading exonuclease activity that corrects errors arising during DNA replication. The sequence is that of DNA polymerase epsilon catalytic subunit A (POL2) from Saccharomyces cerevisiae (strain ATCC 204508 / S288c) (Baker's yeast).